A 215-amino-acid polypeptide reads, in one-letter code: Phosphoenolpyruvate guanylyltransferase (215 aa).

Positions 144, 159, and 162 each coordinate phosphoenolpyruvate.

It belongs to the CofC family.

It carries out the reaction phosphoenolpyruvate + GTP + H(+) = enolpyruvoyl-2-diphospho-5'-guanosine + diphosphate. The protein operates within cofactor biosynthesis; coenzyme F420 biosynthesis. In terms of biological role, guanylyltransferase that catalyzes the activation of phosphoenolpyruvate (PEP) as enolpyruvoyl-2-diphospho-5'-guanosine, via the condensation of PEP with GTP. It is involved in the biosynthesis of coenzyme F420, a hydride carrier cofactor. This Geodermatophilus obscurus (strain ATCC 25078 / DSM 43160 / JCM 3152 / CCUG 61914 / KCC A-0152 / KCTC 9177 / NBRC 13315 / NRRL B-3577 / G-20) protein is Phosphoenolpyruvate guanylyltransferase.